The chain runs to 543 residues: Chaperonin GroEL (543 aa).

ATP-binding positions include 29–32 (TIGP), 86–90 (DGTTT), Gly413, 478–480 (NAA), and Asp494.

Belongs to the chaperonin (HSP60) family. Forms a cylinder of 14 subunits composed of two heptameric rings stacked back-to-back. Interacts with the co-chaperonin GroES.

The protein localises to the cytoplasm. The catalysed reaction is ATP + H2O + a folded polypeptide = ADP + phosphate + an unfolded polypeptide.. Together with its co-chaperonin GroES, plays an essential role in assisting protein folding. The GroEL-GroES system forms a nano-cage that allows encapsulation of the non-native substrate proteins and provides a physical environment optimized to promote and accelerate protein folding. The sequence is that of Chaperonin GroEL from Limosilactobacillus fermentum (strain NBRC 3956 / LMG 18251) (Lactobacillus fermentum).